The primary structure comprises 309 residues: Methionyl-tRNA formyltransferase (309 aa).

109–112 (SLLP) is a binding site for (6S)-5,6,7,8-tetrahydrofolate.

Belongs to the Fmt family.

The enzyme catalyses L-methionyl-tRNA(fMet) + (6R)-10-formyltetrahydrofolate = N-formyl-L-methionyl-tRNA(fMet) + (6S)-5,6,7,8-tetrahydrofolate + H(+). Its function is as follows. Attaches a formyl group to the free amino group of methionyl-tRNA(fMet). The formyl group appears to play a dual role in the initiator identity of N-formylmethionyl-tRNA by promoting its recognition by IF2 and preventing the misappropriation of this tRNA by the elongation apparatus. In Clostridium perfringens (strain SM101 / Type A), this protein is Methionyl-tRNA formyltransferase.